The following is a 728-amino-acid chain: MDDASVLKYLQENPKLVEDFVVSNEISPETFKRWAVRRTMKYKNVKNGTSGGTGAWTEPDLSMKRRVILETSDNRTRILYEITQCCGQLIGTNSIELIVQNDEGAFSCRKTENGELKLKKVKTSKSADYIQTIVNAGNQTIAEIHFYTQLDSTEKSIVNAVCTWAAATNYYSELYTHKQEGSDGQDIHENIAKQRKLSNFLLDVARSIFHDIVSMDAVIIKVMNFAQKLVDADRASLFLVDSKNAQIYARIFDVGTGDEEHVRVNSEGQKEIRFDMSKGIAGYVASTGEGLNIENAYEDERFNADVDSKTGYTTKTILCMPILIRGIVIGVVQMVNKHDGVFTRQDEDAFEIFAVYCGLALHHAKLYDKIRRSEQKYRVALEVLAYHSVCNADEVNKLKKIEINNRIVELETIDFNGMRLSELEKPLYAVYMFKTLFADTLRFDTEDLIRFVLTVRKNYRRVAYHNWAHGWSVAHAMFATLMNSPDAFTKLEALALYVSCLCHDLDHRGKNNAYMKTMSTPLASIYSTSVMERHHFNQTVTILQQDGHNILKSLSSEDYKKTLSLIKHCILATDLALFFSNKAKLNVILDNNTFDINRQEHRLLTQAVMMTGCDLVASAKPWNIQTETVKVIFEEFYDQGDAERLSGKEPIPMMDRQQAHMLPQMQVGFMRGICMPCYDLIARIFPKNDKMRERCEYNAKKWEELAEEQRKKQEALAQQNGEANETQE.

The GAF domain occupies 214–371 (SMDAVIIKVM…HHAKLYDKIR (158 aa)). A PDEase domain is found at 390–709 (CNADEVNKLK…KKWEELAEEQ (320 aa)). The Proton donor role is filled by histidine 465. Residues histidine 469, histidine 503, aspartate 504, and aspartate 614 each coordinate a divalent metal cation. The stretch at 691–728 (MRERCEYNAKKWEELAEEQRKKQEALAQQNGEANETQE) forms a coiled coil. Residues 708 to 728 (EQRKKQEALAQQNGEANETQE) are disordered. Residues 716 to 728 (LAQQNGEANETQE) show a composition bias toward polar residues.

This sequence belongs to the cyclic nucleotide phosphodiesterase family. The cofactor is a divalent metal cation.

The catalysed reaction is a nucleoside 3',5'-cyclic phosphate + H2O = a nucleoside 5'-phosphate + H(+). Functionally, redundantly with pde-1, plays a role in the AFD thermosensory neurons to regulate microvilli receptive ending morphology, possibly by regulating cGMP levels. This is Probable 3',5'-cyclic phosphodiesterase pde-5 (pde-5) from Caenorhabditis elegans.